The primary structure comprises 244 residues: MKSLWLDIGNTRLKYWITENQQIIEHAAELHLQSPADLLLGLIQHFKHQGLHRIGISSVLDTENNQRIQQILKWLEIPVVFAKVHAEYAGLQCGYEVPSQLGIDRWLQVLAVAEEKENYCIIGCGTALTIDLTKGKQHLGGYILPNLYLQRDALIQNTKGIKIPDSAFDNLNPGNNTVDAVHHGILLGLISTIESIMQQSPKKLLLTGGDAKLFAKFLQKYDPVVETDLLLKGLQQYIAHYPKD.

Residue 7–14 (DIGNTRLK) coordinates ATP. Residues Tyr-95 and 102-105 (GIDR) contribute to the substrate site. Asp-104 acts as the Proton acceptor in catalysis. Thr-126 lines the ATP pocket. Substrate is bound at residue Thr-177.

Belongs to the type III pantothenate kinase family. As to quaternary structure, homodimer. NH4(+) is required as a cofactor. It depends on K(+) as a cofactor.

The protein resides in the cytoplasm. It catalyses the reaction (R)-pantothenate + ATP = (R)-4'-phosphopantothenate + ADP + H(+). The protein operates within cofactor biosynthesis; coenzyme A biosynthesis; CoA from (R)-pantothenate: step 1/5. Its function is as follows. Catalyzes the phosphorylation of pantothenate (Pan), the first step in CoA biosynthesis. The polypeptide is Type III pantothenate kinase (Acinetobacter baumannii (strain ACICU)).